A 162-amino-acid chain; its full sequence is Protein NrdI (162 aa).

Belongs to the NrdI family.

Functionally, probably involved in ribonucleotide reductase function. The chain is Protein NrdI from Streptococcus pyogenes serotype M3 (strain ATCC BAA-595 / MGAS315).